The primary structure comprises 477 residues: Probable cytosolic Fe-S cluster assembly factor GL21135 (477 aa).

[4Fe-4S] cluster-binding residues include cysteine 23, cysteine 69, cysteine 72, cysteine 75, cysteine 188, cysteine 244, cysteine 396, and cysteine 400.

The protein belongs to the NARF family.

Functionally, component of the cytosolic iron-sulfur (Fe/S) protein assembly machinery. Required for maturation of extramitochondrial Fe/S proteins. This chain is Probable cytosolic Fe-S cluster assembly factor GL21135, found in Drosophila persimilis (Fruit fly).